A 301-amino-acid polypeptide reads, in one-letter code: Homoserine O-acetyltransferase (301 aa).

Cys-142 acts as the Acyl-thioester intermediate in catalysis. Substrate is bound by residues Lys-163 and Ser-192. Catalysis depends on His-235, which acts as the Proton acceptor. Glu-237 is a catalytic residue. Arg-249 lines the substrate pocket.

The protein belongs to the MetA family.

It localises to the cytoplasm. It carries out the reaction L-homoserine + acetyl-CoA = O-acetyl-L-homoserine + CoA. It participates in amino-acid biosynthesis; L-methionine biosynthesis via de novo pathway; O-acetyl-L-homoserine from L-homoserine: step 1/1. Functionally, transfers an acetyl group from acetyl-CoA to L-homoserine, forming acetyl-L-homoserine. The chain is Homoserine O-acetyltransferase from Succinatimonas hippei (strain DSM 22608 / JCM 16073 / KCTC 15190 / YIT 12066).